Consider the following 139-residue polypeptide: ATP synthase epsilon chain (139 aa).

The protein belongs to the ATPase epsilon chain family. In terms of assembly, F-type ATPases have 2 components, CF(1) - the catalytic core - and CF(0) - the membrane proton channel. CF(1) has five subunits: alpha(3), beta(3), gamma(1), delta(1), epsilon(1). CF(0) has three main subunits: a, b and c.

It is found in the cell inner membrane. Its function is as follows. Produces ATP from ADP in the presence of a proton gradient across the membrane. The protein is ATP synthase epsilon chain (atpC) of Escherichia coli O157:H7.